The following is a 212-amino-acid chain: uncharacterized protein (212 aa).

This sequence belongs to the methyltransferase superfamily.

This is an uncharacterized protein from Synechocystis sp. (strain ATCC 27184 / PCC 6803 / Kazusa).